The chain runs to 257 residues: 3-methyl-2-oxobutanoate hydroxymethyltransferase (257 aa).

Mg(2+) contacts are provided by aspartate 42 and aspartate 86. 3-methyl-2-oxobutanoate is bound by residues 42-43 (DS), aspartate 86, and lysine 116. Glutamate 118 lines the Mg(2+) pocket. The active-site Proton acceptor is glutamate 185.

This sequence belongs to the PanB family. In terms of assembly, homodecamer; pentamer of dimers. The cofactor is Mg(2+).

It is found in the cytoplasm. It catalyses the reaction 3-methyl-2-oxobutanoate + (6R)-5,10-methylene-5,6,7,8-tetrahydrofolate + H2O = 2-dehydropantoate + (6S)-5,6,7,8-tetrahydrofolate. Its pathway is cofactor biosynthesis; (R)-pantothenate biosynthesis; (R)-pantoate from 3-methyl-2-oxobutanoate: step 1/2. In terms of biological role, catalyzes the reversible reaction in which hydroxymethyl group from 5,10-methylenetetrahydrofolate is transferred onto alpha-ketoisovalerate to form ketopantoate. In Prochlorococcus marinus (strain MIT 9215), this protein is 3-methyl-2-oxobutanoate hydroxymethyltransferase.